The primary structure comprises 248 residues: 26.2 kDa heat shock protein, mitochondrial (248 aa).

A mitochondrion-targeting transit peptide spans 1–32 (MASTVALKGRPLATLLRQLLAADAPPAATGRP). Residues 26–48 (PAATGRPVAAAPAASGKPVTAPA) form a disordered region. A sHSP domain is found at 139–248 (ATAAARRGGW…RKDVFQVNVE (110 aa)).

The protein belongs to the small heat shock protein (HSP20) family. In terms of assembly, may form oligomeric structures.

It localises to the mitochondrion. This Oryza sativa subsp. japonica (Rice) protein is 26.2 kDa heat shock protein, mitochondrial (HSP26.2).